We begin with the raw amino-acid sequence, 109 residues long: Protein ripply2 (109 aa).

Residues 1–15 (MENITFTSGLNSEMD) show a composition bias toward polar residues. 2 disordered regions span residues 1 to 42 (MENI…RPAD) and 88 to 109 (YEDPDTEDEEDYSDEEDEKELR). A WRPW motif motif is present at residues 20–23 (WRPW). Residues 30–42 (KAPDYKPYKRPAD) show a composition bias toward basic and acidic residues. A ripply homology domain region spans residues 53 to 88 (HPVKLFWPKSQCFDYLYEDAEVLLRNYPVQATICLY). The span at 89 to 109 (EDPDTEDEEDYSDEEDEKELR) shows a compositional bias: acidic residues.

This sequence belongs to the ripply family. As to expression, first expressed in the paraxial mesoderm at the 90% epiboly stage, and subsequently confined to the presomitic mesoderm. Expressed in the rostral compartment of S-I and S-II.

It is found in the nucleus. Plays a role in somitogenesis. Required for somite segregation and establishment of rostrocaudal polarity in somites. The polypeptide is Protein ripply2 (Danio rerio (Zebrafish)).